Reading from the N-terminus, the 147-residue chain is Nucleoside diphosphate kinase (147 aa).

Lysine 9, phenylalanine 57, arginine 85, threonine 91, arginine 102, and asparagine 112 together coordinate ATP. Histidine 115 (pros-phosphohistidine intermediate) is an active-site residue.

Belongs to the NDK family. In terms of assembly, homotetramer. Mg(2+) serves as cofactor.

Its subcellular location is the cytoplasm. It carries out the reaction a 2'-deoxyribonucleoside 5'-diphosphate + ATP = a 2'-deoxyribonucleoside 5'-triphosphate + ADP. The enzyme catalyses a ribonucleoside 5'-diphosphate + ATP = a ribonucleoside 5'-triphosphate + ADP. Its function is as follows. Major role in the synthesis of nucleoside triphosphates other than ATP. The ATP gamma phosphate is transferred to the NDP beta phosphate via a ping-pong mechanism, using a phosphorylated active-site intermediate. The chain is Nucleoside diphosphate kinase from Fervidobacterium nodosum (strain ATCC 35602 / DSM 5306 / Rt17-B1).